We begin with the raw amino-acid sequence, 174 residues long: Large ribosomal subunit protein uL10 (174 aa).

Belongs to the universal ribosomal protein uL10 family. Part of the ribosomal stalk of the 50S ribosomal subunit. The N-terminus interacts with L11 and the large rRNA to form the base of the stalk. The C-terminus forms an elongated spine to which L12 dimers bind in a sequential fashion forming a multimeric L10(L12)X complex.

Forms part of the ribosomal stalk, playing a central role in the interaction of the ribosome with GTP-bound translation factors. This chain is Large ribosomal subunit protein uL10, found in Methylibium petroleiphilum (strain ATCC BAA-1232 / LMG 22953 / PM1).